The chain runs to 213 residues: Kynurenine formamidase (213 aa).

Residue Trp18 participates in substrate binding. Residues His48, His52, and Asp54 each coordinate Zn(2+). Residue His58 is the Proton donor/acceptor of the active site. His160 and Glu172 together coordinate Zn(2+).

It belongs to the Cyclase 1 superfamily. KynB family. Homodimer. Zn(2+) serves as cofactor.

The enzyme catalyses N-formyl-L-kynurenine + H2O = L-kynurenine + formate + H(+). It functions in the pathway amino-acid degradation; L-tryptophan degradation via kynurenine pathway; L-kynurenine from L-tryptophan: step 2/2. Its function is as follows. Catalyzes the hydrolysis of N-formyl-L-kynurenine to L-kynurenine, the second step in the kynurenine pathway of tryptophan degradation. This chain is Kynurenine formamidase, found in Burkholderia pseudomallei (strain 1106a).